We begin with the raw amino-acid sequence, 242 residues long: Large ribosomal subunit protein uL30y (242 aa).

This sequence belongs to the universal ribosomal protein uL30 family.

In Arabidopsis thaliana (Mouse-ear cress), this protein is Large ribosomal subunit protein uL30y (RPL7B).